A 120-amino-acid polypeptide reads, in one-letter code: UPF0231 protein YacL (120 aa).

The protein belongs to the UPF0231 family.

The sequence is that of UPF0231 protein YacL from Salmonella agona (strain SL483).